The primary structure comprises 322 residues: Probable heme-iron transport system permease protein IsdF (322 aa).

The next 9 membrane-spanning stretches (helical) occupy residues 9-29 (LLFL…FVTG), 61-81 (ILIA…LQAA), 89-109 (ANII…MLFI), 114-134 (FYLP…IILL), 143-163 (VSMI…LEIL), 179-199 (IWSD…LTLL), 233-253 (VFLA…GIIV), 267-287 (VLIP…DLLG), and 294-314 (LEIP…IYLI).

It belongs to the binding-protein-dependent transport system permease family. FecCD subfamily.

Its subcellular location is the cell membrane. Part of the binding-protein-dependent transport system for heme-iron. Responsible for the translocation of the substrate across the membrane. This chain is Probable heme-iron transport system permease protein IsdF (isdF), found in Staphylococcus aureus (strain MSSA476).